The sequence spans 98 residues: Cell cycle protein GpsB (98 aa).

Positions 34-71 (LDIVIKDYEAFQQELDELRQENARLKRQVEELQKRPTT) form a coiled coil.

It belongs to the GpsB family. As to quaternary structure, forms polymers through the coiled coil domains. Interacts with PBP1, MreC and EzrA.

The protein localises to the cytoplasm. Its function is as follows. Divisome component that associates with the complex late in its assembly, after the Z-ring is formed, and is dependent on DivIC and PBP2B for its recruitment to the divisome. Together with EzrA, is a key component of the system that regulates PBP1 localization during cell cycle progression. Its main role could be the removal of PBP1 from the cell pole after pole maturation is completed. Also contributes to the recruitment of PBP1 to the division complex. Not essential for septum formation. The chain is Cell cycle protein GpsB from Geobacillus thermodenitrificans (strain NG80-2).